A 224-amino-acid chain; its full sequence is Beta-casein (224 aa).

An N-terminal signal peptide occupies residues 1–15 (MKVLILACLVALALA). Serine 30, serine 32, serine 33, and serine 34 each carry phosphoserine. The residue at position 50 (serine 50) is a Phosphoserine; in variant A1, variant A2, variant A3, variant B, variant E, variant F, variant G and variant H.

The protein belongs to the beta-casein family. As to expression, mammary gland specific. Secreted in milk.

The protein localises to the secreted. In terms of biological role, important role in determination of the surface properties of the casein micelles. Its function is as follows. Casoparan acts as a macrophage activator, increasing the phagocytic activity of macrophages and peroxide release from macrophages. It also acts as a bradykinin-potentiating peptide. Functionally, casohypotensin acts as a bradykinin-potentiating peptide. Induces hypotension in rats. Acts as a strong competitive inhibitor of endo-oligopeptidase A. Antioxidant peptide has antioxidant activity. This Bos taurus (Bovine) protein is Beta-casein (CSN2).